A 217-amino-acid polypeptide reads, in one-letter code: D-methionine transport system permease protein MetI (217 aa).

Over 1 to 19 (MSEPMMWLLVRGVWETLAM) the chain is Periplasmic. The 192-residue stretch at 13 to 204 (VWETLAMTFV…LLVILVYLIQ (192 aa)) folds into the ABC transmembrane type-1 domain. Residues 20–40 (TFVSGFFGFVVGLPVGVLLYV) traverse the membrane as a helical segment. Residues 41-57 (TRPGQIIANAKLYRTVS) are Cytoplasmic-facing. A helical membrane pass occupies residues 58–78 (AIVNIFRSIPFIILLVWMIPF). At 79–80 (TR) the chain is on the periplasmic side. The chain crosses the membrane as a helical span at residues 81–101 (VIVGTSIGLQAAIVPLTVGAA). Over 102 to 151 (PFIARMVENALLEIPTGLIEASRAMGATPMQIVRKVLLPEALPGLVNAAT) the chain is Cytoplasmic. A helical membrane pass occupies residues 152–172 (ITLITLVGYSAMGGAVGAGGL). Residues 173–185 (GQIGYQYGYIGYN) are Periplasmic-facing. A helical membrane pass occupies residues 186–206 (ATVMNTVLVLLVILVYLIQFA). At 207–217 (GDRIVRAVTRK) the chain is on the cytoplasmic side.

The protein belongs to the binding-protein-dependent transport system permease family. CysTW subfamily.

It localises to the cell inner membrane. Part of the binding-protein-dependent transport system for D-methionine and the toxic methionine analog alpha-methyl-methionine. Probably responsible for the translocation of the substrate across the membrane. This chain is D-methionine transport system permease protein MetI (metI), found in Escherichia coli O157:H7.